The chain runs to 943 residues: MSTMRLLTLALLFSCSFARAACDPKIVNIGAVLSTRKHEQMFREAVNQANKRHGSWKIQLNATSVTHKPNAIQMALSVCEDLISSQVYAILVSHPPTPNDHFTPTPVSYTAGFYRIPVLGLTTRMSIYSDKSIHLSFLRTVPPYSHQSSVWFEMMRVYSWNHIILLVSDDHEGRAAQKRLETLLEERESKSKKRNYENLDQLSYDHKRGPKAEKVLQFDPGTKNVTALLMEARELEARVIILSASEDDAATVYRAAAMLNMTGSGYVWLVGEREISGNALRYAPDGIIGLQLINGKNESAHISDAVGVVAQAVHELLEKENITDPPRGCVGNTNIWKTGPLFKRVLMSSKYADGVTGRVEFNEDGDRKFANYSIMNLQNRKLVQVGIYNGTHVIPNDRKIIWPGGETEKPRGYQMSTRLKIVTIHQEPFVYVKPTLSDGTCKEEFTVNGDPVKKVICTGPNDTSPGSPRHTVPQCCYGFCIDLLIKLARTMNFTYEVHLVADGKFGTQERVNNSNKKEWNGMMGELLSGQADMIVAPLTINNERAQYIEFSKPFKYQGLTILVKKEIPRSTLDSFMQPFQSTLWLLVGLSVHVVAVMLYLLDRFSPFGRFKVNSEEEEEDALTLSSAMWFSWGVLLNSGIGEGAPRSFSARILGMVWAGFAMIIVASYTANLAAFLVLDRPEERITGINDPRLRNPSDKFIYATVKQSSVDIYFRRQVELSTMYRHMEKHNYESAAEAIQAVRDNKLHAFIWDSAVLEFEASQKCDLVTTGELFFRSGFGIGMRKDSPWKQNVSLSILKSHENGFMEDLDKTWVRYQECDSRSNAPATLTFENMAGVFMLVAGGIVAGIFLIFIEIAYKRHKDARRKQMQLAFAAVNVWRKNLQDRKSGRAEPDPKKKATFRAITSTLASSFKRRRSSKDTQYHPTDITGTLNLSDPSVSTVV.

The N-terminal stretch at methionine 1–alanine 20 is a signal peptide. The Extracellular portion of the chain corresponds to alanine 21–glutamine 580. N-linked (GlcNAc...) asparagine glycans are attached at residues asparagine 61, asparagine 224, asparagine 260, asparagine 297, asparagine 321, asparagine 371, asparagine 389, asparagine 461, asparagine 492, and asparagine 512. Residues cysteine 79 and cysteine 329 are joined by a disulfide bond. 2 disulfides stabilise this stretch: cysteine 441–cysteine 475 and cysteine 457–cysteine 476. Residues proline 537, threonine 539, and arginine 544 each contribute to the glycine site. The helical transmembrane segment at serine 581–leucine 601 threads the bilayer. At aspartate 602 to threonine 623 the chain is on the cytoplasmic side. The segment at residues leucine 624–proline 645 is an intramembrane region (discontinuously helical). The interval leucine 624–proline 645 is pore-forming. The Cytoplasmic portion of the chain corresponds to arginine 646 to arginine 651. The helical transmembrane segment at isoleucine 652–tyrosine 668 threads the bilayer. Residues threonine 669–asparagine 833 are Extracellular-facing. N-linked (GlcNAc...) asparagine glycosylation is present at asparagine 695. Glycine is bound by residues serine 709 and aspartate 753. A disulfide bond links cysteine 765 and cysteine 819. The N-linked (GlcNAc...) asparagine glycan is linked to asparagine 792. Residues methionine 834–isoleucine 854 form a helical membrane-spanning segment. Over glutamate 855–valine 943 the chain is Cytoplasmic. 4 positions are modified to phosphoserine: serine 910, serine 911, serine 917, and serine 918.

The protein belongs to the glutamate-gated ion channel (TC 1.A.10.1) family. NR1/GRIN1 subfamily. Heterotetramer; the NMDAR subunits are modular and harbor tiered domains that function in concert to regulate opening and closing of the cation-selective ion channel pore. Forms heterotetrameric channels composed of two GluN1/zeta subunits (GRIN1), and two identical GluN2/epsilon subunits (GRIN2A, GRIN2B, GRIN2C or GRIN2D) or GluN3 subunits (GRIN3A or GRIN3B) (in vitro). Can also form heterotetrameric channels that contain at least two GluN1 subunits and at least two different GluN2 subunits (or a combination of one GluN2 and one GluN3 subunits) (in vitro). In vivo, the subunit composition may vary in function of the expression levels of the different subunits. Found in a complex with GRIN2A or GRIN2B, GRIN3A and PPP2CB. Found in a complex with GRIN2A or GRIN2B and GRIN3B. Interacts with SNX27 (via PDZ domain); the interaction is required for recycling to the plasma membrane when endocytosed and prevent degradation in lysosomes. Interacts with DLG4 and MPDZ. Interacts with LRFN1 and LRFN2. Interacts with MYZAP. Found in a complex with DLG4 and PRR7. Found in a complex with GRIN2B and PRR7. Interacts with PRR7; the interaction is reduced following NMDA receptor activity. NMDA is probably regulated by C-terminal phosphorylation of an isoform of GRIN1 by PKC. Dephosphorylated on Ser-897 probably by protein phosphatase 2A (PPP2CB). Its phosphorylated state is influenced by the formation of the NMDAR-PPP2CB complex and the NMDAR channel activity.

The protein localises to the cell membrane. The protein resides in the postsynaptic cell membrane. It localises to the postsynaptic density membrane. Its subcellular location is the synaptic cell membrane. It catalyses the reaction Ca(2+)(in) = Ca(2+)(out). The catalysed reaction is Na(+)(in) = Na(+)(out). The enzyme catalyses K(+)(in) = K(+)(out). Functionally, component of N-methyl-D-aspartate (NMDA) receptors (NMDARs) that function as heterotetrameric, ligand-gated cation channels with high calcium permeability and voltage-dependent block by Mg(2+). NMDARs participate in synaptic plasticity for learning and memory formation by contributing to the long-term potentiation (LTP). Channel activation requires binding of the neurotransmitter L-glutamate to the GluN2 subunit, glycine or D-serine binding to the GluN1 subunit, plus membrane depolarization to eliminate channel inhibition by Mg(2+). NMDARs mediate simultaneously the potasium efflux and the influx of calcium and sodium. Each GluN2 or GluN3 subunit confers differential attributes to channel properties, including activation, deactivation and desensitization kinetics, pH sensitivity, Ca2(+) permeability, and binding to allosteric modulators. The GluN3 subunits confer distinctive ion channel activation mechanism, which relies exclusively on glycine and does not involve glutamate. In Canis lupus familiaris (Dog), this protein is Glutamate receptor ionotropic, NMDA 1.